A 1027-amino-acid polypeptide reads, in one-letter code: YRAGPRYIQAQVGPIGPRGPPGPPGSPGQQGYQGLRGEPGDSGPMGPIGKRGPPGPAGIAGKSGDDGRDGEPGPRGGIGPMGPRGAGGMPGMPGPKGHRGFRGLSGSKGEQGKSGNQGPDGGPGPAGPSGPIGPRGQTGERGRDGKSGLPGLRGVDGLAGPPGPPGPIGSTGSPGFPGTPGSKGDRGQSGIKGAQGLQGPVGLSGQPGVAGENGHPGMPGMDGANGEPGASGESGLPGPSGFPGPRGMPGTAGSPGQAGAKGDGGPTGEQGRPGAPGVKGSSGPPGDVGAPGHAGEAGKRGSPGSPGPAGSPGPQGDRGLPGSRGLPGMTGASGAMGIPGEKGPSGEPGAKGPTGDTGRQGNQGTPGIAGLPGNPGSDGRPGKDGRPGIRGKDGKQGEQGPQGPQGLAGLQGRAGPPGARGEPGKNGAPGEPGAHGEQGDAGKDGETGAAGPPGAAGPTGARGPPGPRGQQGFQGLAGAQGTPGEAGKTGERGAVGATGPSGPAGPGGERGAPGDRGNVGPRGMPGERGATGPAGPTGSPGVAGAKGQGGPPGPAGLVGLPGERGPKGVGGSKGSRGDIGPRGKAGERGKDGERGERGENGLPGPSGLAASKGERGDMGSPGERGSPGPAGERGPAGSQGIQGQPGPPGDAGPAGTKGDIGFPGERGTRGATGKQGARGPRGLAGKRGLRGAGGSRGETGAQGEIGLPGSPGQPGLPGPSGQPGPSGPAGTAGKQGVKGARGSPGLVGKQGDRGSDGEPGRDGTKGERGEDGPPGVSGPTGAPGQQGERGMPGMVGLRGETGPMGGQGMKGDGGPPGPSGDRGERGNAGPQGPTGPSGQAGAPGQEGAPGKDGLPGLAGRPGERGEPGVAGRAGSQGLAGLMGQRGLPGAAGPPGDRGERGEPGGQGVQGPVGAPGSQGPAGIMGMKGEAGGKGAKGDKGWTGLPGLQGLQGTPGHSGESGPPGAPGPRGARGEAGGRGSQGPPGKDGQPGPSGRVGPRGPSGDDGRSGPPGPPGPPGPPGNSDYGA.

Residues 1–12 (YRAGPRYIQAQV) are nonhelical region (N-terminal). The tract at residues 1–1027 (YRAGPRYIQA…GPPGNSDYGA (1027 aa)) is disordered. Residues 13 to 1023 (GPIGPRGPPG…PGPPGPPGNS (1011 aa)) are triple-helical region. Residues 17–26 (PRGPPGPPGS) are compositionally biased toward pro residues. 4-hydroxyproline; partial occurs at positions 21 and 24. Residues Pro-27 and Pro-39 each carry the 4-hydroxyproline modification. Pro-53 is subject to 3-hydroxyproline; partial. Residue Pro-54 is modified to 4-hydroxyproline. A compositionally biased stretch (basic and acidic residues) spans 63–72 (SGDDGRDGEP). Pro-72 bears the 4-hydroxyproline; partial mark. The span at 73–91 (GPRGGIGPMGPRGAGGMPG) shows a compositional bias: gly residues. Pro-90 and Pro-93 each carry 4-hydroxyproline. 5-hydroxylysine is present on residues Lys-96 and Lys-108. 2 O-linked (Gal...) hydroxylysine glycosylation sites follow: Lys-96 and Lys-108. 4-hydroxyproline; partial occurs at positions 123 and 128. A 4-hydroxyproline modification is found at Pro-150. At Pro-161 the chain carries 3-hydroxyproline; partial. The residue at position 162 (Pro-162) is a 4-hydroxyproline. 3-hydroxyproline; partial is present on Pro-164. 4-hydroxyproline occurs at positions 165, 174, 177, and 180. Residues 168–182 (IGSTGSPGFPGTPGS) are compositionally biased toward low complexity. Residues Lys-183 and Lys-192 each carry the 5-hydroxylysine modification. O-linked (Gal...) hydroxylysine glycosylation is present at Lys-192. 5 positions are modified to 4-hydroxyproline: Pro-207, Pro-216, Pro-219, Pro-228, and Pro-237. Positions 227 to 249 (EPGASGESGLPGPSGFPGPRGMP) are enriched in low complexity. Pro-243 is modified (4-hydroxyproline; partial). A 4-hydroxyproline mark is found at Pro-249 and Pro-255. Over residues 259–268 (GAKGDGGPTG) the composition is skewed to gly residues. Lys-261 bears the 5-hydroxylysine mark. An O-linked (Gal...) hydroxylysine glycan is attached at Lys-261. Pro-273 and Pro-276 each carry 4-hydroxyproline; partial. Lys-279 bears the 5-hydroxylysine mark. Lys-279 is a glycosylation site (O-linked (Gal...) hydroxylysine). Residues Pro-285, Pro-291, and Pro-303 each carry the 4-hydroxyproline; partial modification. A 4-hydroxyproline mark is found at Pro-306, Pro-312, Pro-321, Pro-327, and Pro-339. Lys-342 is modified (5-hydroxylysine). Residue Pro-348 is modified to 4-hydroxyproline; partial. Residue Lys-351 is modified to 5-hydroxylysine; partial. Residues Pro-366, Pro-372, and Pro-375 each carry the 4-hydroxyproline modification. The segment covering 380 to 396 (RPGKDGRPGIRGKDGKQ) has biased composition (basic and acidic residues). A 4-hydroxyproline; partial modification is found at Pro-381. Pro-387 is subject to 4-hydroxyproline. Over residues 398 to 420 (EQGPQGPQGLAGLQGRAGPPGAR) the composition is skewed to low complexity. At Pro-416 the chain carries 3-hydroxyproline; partial. Residues Pro-417, Pro-423, Pro-429, and Pro-432 each carry the 4-hydroxyproline modification. Basic and acidic residues predominate over residues 437–446 (EQGDAGKDGE). Residues 447 to 480 (TGAAGPPGAAGPTGARGPPGPRGQQGFQGLAGAQ) show a composition bias toward low complexity. 4-hydroxyproline occurs at positions 453, 465, and 483. Residues Pro-500, Pro-503, and Pro-506 each carry the 4-hydroxyproline; partial modification. Over residues 502 to 511 (GPAGPGGERG) the composition is skewed to gly residues. 4-hydroxyproline occurs at positions 513 and 525. Positions 527–543 (ERGATGPAGPTGSPGVA) are enriched in low complexity. Residues Pro-533 and Pro-536 each carry the 4-hydroxyproline; partial modification. Pro-540 bears the 4-hydroxyproline mark. A 5-hydroxylysine modification is found at Lys-546. Pro-551 carries the 3-hydroxyproline; partial modification. A 4-hydroxyproline mark is found at Pro-552 and Pro-561. 5-hydroxylysine is present on residues Lys-567 and Lys-573. O-linked (Gal...) hydroxylysine glycosylation occurs at Lys-573. Basic and acidic residues predominate over residues 575 to 599 (SRGDIGPRGKAGERGKDGERGERGE). Residue Pro-603 is modified to 4-hydroxyproline. Lys-612 carries the 5-hydroxylysine modification. Residue Lys-612 is glycosylated (O-linked (Gal...) hydroxylysine). Position 621 is a 4-hydroxyproline; partial (Pro-621). Pro-627 carries the post-translational modification 4-hydroxyproline. Positions 635–644 (PAGSQGIQGQ) are enriched in low complexity. A 4-hydroxyproline; partial modification is found at Pro-645. Residue Pro-647 is modified to 3-hydroxyproline; partial. Pro-648 is modified (4-hydroxyproline). 5-hydroxylysine is present on Lys-657. The O-linked (Gal...) hydroxylysine glycan is linked to Lys-657. Pro-663, Pro-708, Pro-711, Pro-714, Pro-717, and Pro-723 each carry 4-hydroxyproline. Over residues 698-710 (ETGAQGEIGLPGS) the composition is skewed to low complexity. Pro residues predominate over residues 714–726 (PGLPGPSGQPGPS). Residue Lys-738 is modified to 5-hydroxylysine. Lys-738 is a glycosylation site (O-linked (Gal...) hydroxylysine). 2 positions are modified to 4-hydroxyproline: Pro-744 and Pro-759. Residues 750-771 (QGDRGSDGEPGRDGTKGERGED) show a composition bias toward basic and acidic residues. Lys-765 carries the post-translational modification 5-hydroxylysine. Lys-765 carries O-linked (Gal...) hydroxylysine glycosylation. Pro-773 bears the 3-hydroxyproline; partial mark. Pro-774, Pro-783, and Pro-792 each carry 4-hydroxyproline. A compositionally biased stretch (gly residues) spans 802–814 (GPMGGQGMKGDGG). Lys-810 carries the 5-hydroxylysine modification. O-linked (Gal...) hydroxylysine glycosylation is present at Lys-810. At Pro-815 the chain carries 3-hydroxyproline; partial. Residues Pro-816, Pro-843, Pro-849, Pro-855, Pro-861, Pro-867, Pro-888, Pro-894, Pro-903, and Pro-915 each carry the 4-hydroxyproline modification. The span at 828 to 848 (AGPQGPTGPSGQAGAPGQEGA) shows a compositional bias: low complexity. Residues 884 to 894 (QRGLPGAAGPP) are compositionally biased toward low complexity. Positions 911–927 (PVGAPGSQGPAGIMGMK) are enriched in low complexity. Position 927 is a 5-hydroxylysine (Lys-927). The O-linked (Gal...) hydroxylysine glycan is linked to Lys-927. Lys-933 bears the 5-hydroxylysine; partial mark. A 5-hydroxylysine mark is found at Lys-936 and Lys-939. Lys-936 carries O-linked (Gal...) hydroxylysine glycosylation. Residues 942-962 (TGLPGLQGLQGTPGHSGESGP) show a composition bias toward low complexity. Pro-945 carries the 4-hydroxyproline modification. Pro-954 is modified (4-hydroxyproline; partial). 2 positions are modified to 4-hydroxyproline: Pro-963 and Pro-966. A compositionally biased stretch (gly residues) spans 973–982 (GEAGGRGSQG). The segment covering 983 to 1001 (PPGKDGQPGPSGRVGPRGP) has biased composition (low complexity). Pro-984 and Pro-990 each carry 4-hydroxyproline. Pro-1010 carries the 3-hydroxyproline; partial modification. Positions 1010–1020 (PPGPPGPPGPP) are enriched in pro residues. Pro-1011 bears the 4-hydroxyproline mark. Pro-1013 carries the 3-hydroxyproline; partial modification. The residue at position 1014 (Pro-1014) is a 4-hydroxyproline. The residue at position 1016 (Pro-1016) is a 3-hydroxyproline; partial. 4-hydroxyproline is present on Pro-1017. Pro-1019 is subject to 3-hydroxyproline; partial. Pro-1020 bears the 4-hydroxyproline mark. The nonhelical region (C-terminal) stretch occupies residues 1024–1027 (DYGA).

Homotetramer.

It is found in the secreted. The protein localises to the extracellular space. The protein resides in the extracellular matrix. In terms of biological role, fibril-forming collagen. The polypeptide is Fibril-forming collagen alpha chain (Riftia pachyptila (Vent tube worm)).